We begin with the raw amino-acid sequence, 103 residues long: Stefin-3 (103 aa).

The Secondary area of contact motif lies at 52–56 (QVVAG).

This sequence belongs to the cystatin family.

The protein resides in the cytoplasm. This is an intracellular thiol proteinase inhibitor. The protein is Stefin-3 (Stfa3) of Mus musculus (Mouse).